Reading from the N-terminus, the 335-residue chain is MMLYFFDPVYMMLAVLGYFVMLLLASTIAPKVASRVSGKFSLFTSMVLLAGMILAISAAIIYLILAYAGVYISFYGLIIFLLIINLLMYLLSPYIINLSYGAQRDERLQMVVNSVARRLNVKPPKAVVVRSPPNAFAYGNFLTGKFVAVSESLMRMLSQEELEAVIGHEIGHHKHRDNAVMLLFGLLPSVIFYLGYALLHSSMRDDRRGAQLAAIGIAAVIVSFIVQILVLAFSRLREYYADFEGVRATNKDAMQRSLAKIHLFYHRYPDYLAPIQDSKFRTLFIYAFTNAVAEPITRADIEALKNMKVSPIQEFLSTHPPLPKRLRFIESIRVF.

A run of 3 helical transmembrane segments spans residues 9–29 (VYMMLAVLGYFVMLLLASTIA), 42–62 (LFTSMVLLAGMILAISAAIIY), and 64–84 (ILAYAGVYISFYGLIIFLLII). His-168 contacts Zn(2+). The active site involves Glu-169. His-172 contributes to the Zn(2+) binding site. 2 helical membrane passes run 179–199 (AVMLLFGLLPSVIFYLGYALL) and 213–233 (AAIGIAAVIVSFIVQILVLAF). Residue Glu-238 coordinates Zn(2+).

The protein belongs to the peptidase M48B family. Zn(2+) is required as a cofactor.

It is found in the cell membrane. The sequence is that of Protease HtpX homolog from Archaeoglobus fulgidus (strain ATCC 49558 / DSM 4304 / JCM 9628 / NBRC 100126 / VC-16).